The primary structure comprises 630 residues: Replication protein E1 (630 aa).

The segment at R26–D46 is disordered. Residues I32 to D46 show a composition bias toward acidic residues. The Nuclear localization signal signature appears at K86–K88. S92 is subject to Phosphoserine; by host. The segment at E136–T166 is disordered. Residues G142 to S155 are compositionally biased toward low complexity. The segment covering E156–T166 has biased composition (polar residues). Residues N167–D333 are DNA-binding region. The region spanning V432–V582 is the SF3 helicase domain. An ATP-binding site is contributed by G458 to S465. K539 is covalently cross-linked (Glycyl lysine isopeptide (Lys-Gly) (interchain with G-Cter in SUMO)).

The protein belongs to the papillomaviridae E1 protein family. Can form hexamers. Interacts with E2 protein; this interaction increases E1 DNA binding specificity. Interacts with host DNA polymerase subunit POLA2. Interacts with host single stranded DNA-binding protein RPA1. Interacts with host TOP1; this interaction stimulates the enzymatic activity of TOP1. Phosphorylated. In terms of processing, sumoylated.

The protein localises to the host nucleus. It catalyses the reaction Couples ATP hydrolysis with the unwinding of duplex DNA by translocating in the 3'-5' direction.. It carries out the reaction ATP + H2O = ADP + phosphate + H(+). Its function is as follows. ATP-dependent DNA 3'-5' helicase required for initiation of viral DNA replication. It forms a complex with the viral E2 protein. The E1-E2 complex binds to the replication origin which contains binding sites for both proteins. During the initial step, a dimer of E1 interacts with a dimer of protein E2 leading to a complex that binds the viral origin of replication with high specificity. Then, a second dimer of E1 displaces the E2 dimer in an ATP-dependent manner to form the E1 tetramer. Following this, two E1 monomers are added to each half of the site, which results in the formation of two E1 trimers on the viral ori. Subsequently, two hexamers will be created. The double hexamer acts as a bi-directional helicase machinery and unwinds the viral DNA and then recruits the host DNA polymerase to start replication. This is Replication protein E1 from Homo sapiens (Human).